Here is a 99-residue protein sequence, read N- to C-terminus: Ubiquitin-related modifier 1 (99 aa).

Glycine 99 is modified (1-thioglycine). Glycine 99 participates in a covalent cross-link: Glycyl lysine isopeptide (Gly-Lys) (interchain with K-? in acceptor proteins).

Belongs to the URM1 family. As to quaternary structure, homodimer; homodimerization may provide an autoprotection to the highly active C-terminal residue before attacking its substrates. Interacts with NCS2 and NCS6. Forms a conjugate with the target protein AHP1. C-terminal thiocarboxylation occurs in 2 steps, it is first acyl-adenylated (-COAMP) via the hesA/moeB/thiF part of UBA4, then thiocarboxylated (-COSH) via the rhodanese domain of UBA4.

The protein localises to the cytoplasm. It localises to the nucleus. Its pathway is tRNA modification; 5-methoxycarbonylmethyl-2-thiouridine-tRNA biosynthesis. Acts as a sulfur carrier required for 2-thiolation of mcm(5)S(2)U at tRNA wobble positions of cytosolic tRNA(Lys), tRNA(Glu) and tRNA(Gln). Serves as sulfur donor in tRNA 2-thiolation reaction by being thiocarboxylated (-COSH) at its C-terminus by the MOCS3 homolog UBA4. The sulfur is then transferred to tRNA to form 2-thiolation of mcm(5)S(2)U. Prior mcm(5) tRNA modification by the elongator complex is required for 2-thiolation. Also acts as a ubiquitin-like protein (UBL) that is covalently conjugated via an isopeptide bond to lysine residues of target proteins such as AHP1. The thiocarboxylated form serves as substrate for conjugation and oxidative stress specifically induces the formation of UBL-protein conjugates. This is Ubiquitin-related modifier 1 from Saccharomyces cerevisiae (strain RM11-1a) (Baker's yeast).